We begin with the raw amino-acid sequence, 218 residues long: Histidine biosynthesis bifunctional protein HisIE (218 aa).

The segment at 1 to 118 (MTDLSELNFD…DAPDTGLDGT (118 aa)) is phosphoribosyl-AMP cyclohydrolase. The phosphoribosyl-ATP pyrophosphohydrolase stretch occupies residues 119-218 (LERVYATITE…SGLKGPKEVG (100 aa)).

This sequence in the N-terminal section; belongs to the PRA-CH family. In the C-terminal section; belongs to the PRA-PH family.

It is found in the cytoplasm. The catalysed reaction is 1-(5-phospho-beta-D-ribosyl)-ATP + H2O = 1-(5-phospho-beta-D-ribosyl)-5'-AMP + diphosphate + H(+). It catalyses the reaction 1-(5-phospho-beta-D-ribosyl)-5'-AMP + H2O = 1-(5-phospho-beta-D-ribosyl)-5-[(5-phospho-beta-D-ribosylamino)methylideneamino]imidazole-4-carboxamide. Its pathway is amino-acid biosynthesis; L-histidine biosynthesis; L-histidine from 5-phospho-alpha-D-ribose 1-diphosphate: step 2/9. It functions in the pathway amino-acid biosynthesis; L-histidine biosynthesis; L-histidine from 5-phospho-alpha-D-ribose 1-diphosphate: step 3/9. This Deinococcus radiodurans (strain ATCC 13939 / DSM 20539 / JCM 16871 / CCUG 27074 / LMG 4051 / NBRC 15346 / NCIMB 9279 / VKM B-1422 / R1) protein is Histidine biosynthesis bifunctional protein HisIE (hisI).